The following is a 193-amino-acid chain: Orotate phosphoribosyltransferase (193 aa).

114–122 (EDVITTGGS) contacts 5-phospho-alpha-D-ribose 1-diphosphate. Orotate contacts are provided by threonine 118 and arginine 146.

Belongs to the purine/pyrimidine phosphoribosyltransferase family. PyrE subfamily. In terms of assembly, homodimer. Mg(2+) is required as a cofactor.

The catalysed reaction is orotidine 5'-phosphate + diphosphate = orotate + 5-phospho-alpha-D-ribose 1-diphosphate. It participates in pyrimidine metabolism; UMP biosynthesis via de novo pathway; UMP from orotate: step 1/2. In terms of biological role, catalyzes the transfer of a ribosyl phosphate group from 5-phosphoribose 1-diphosphate to orotate, leading to the formation of orotidine monophosphate (OMP). The chain is Orotate phosphoribosyltransferase from Chlorobaculum parvum (strain DSM 263 / NCIMB 8327) (Chlorobium vibrioforme subsp. thiosulfatophilum).